The following is a 390-amino-acid chain: S-adenosylmethionine synthase 2 (390 aa).

Position 9 (glutamate 9) interacts with Mg(2+). Position 15 (histidine 15) interacts with ATP. Glutamate 43 serves as a coordination point for K(+). Residues glutamate 56 and glutamine 99 each contribute to the L-methionine site. ATP is bound by residues aspartate 167 to lysine 169, serine 235 to phenylalanine 238, aspartate 246, arginine 252 to lysine 253, alanine 269, lysine 273, and lysine 277. Position 246 (aspartate 246) interacts with L-methionine. Lysine 277 serves as a coordination point for L-methionine.

The protein belongs to the AdoMet synthase family. As to quaternary structure, homotetramer. It depends on Mn(2+) as a cofactor. Requires Mg(2+) as cofactor. Co(2+) serves as cofactor. K(+) is required as a cofactor.

It localises to the cytoplasm. The enzyme catalyses L-methionine + ATP + H2O = S-adenosyl-L-methionine + phosphate + diphosphate. It participates in amino-acid biosynthesis; S-adenosyl-L-methionine biosynthesis; S-adenosyl-L-methionine from L-methionine: step 1/1. In terms of biological role, catalyzes the formation of S-adenosylmethionine from methionine and ATP. The reaction comprises two steps that are both catalyzed by the same enzyme: formation of S-adenosylmethionine (AdoMet) and triphosphate, and subsequent hydrolysis of the triphosphate. The protein is S-adenosylmethionine synthase 2 (SAM2) of Petunia hybrida (Petunia).